Here is a 269-residue protein sequence, read N- to C-terminus: Zinc finger protein SNAI2 (269 aa).

Residues 1–20 are SNAG domain; sequence MPRSFLVKKHFNASKKPNYS. The tract at residues 81 to 117 is disordered; the sequence is SSSLGRVSPPPSSDTSSKDHSGSESPISDEEERLQPK. 4 consecutive C2H2-type zinc fingers follow at residues 129 to 151, 160 to 182, 186 to 208, and 214 to 236; these read FQCNLCNKTYSTFSGLAKHKQLH, FSCKYCDKEYVSLGALKMHIRTH, CVCKICGKAFSRPWLLQGHIRTH, and FSCPHCNRAFADRSNLRAHLQTH. The C2H2-type 5; atypical zinc finger occupies 242-265; that stretch reads YQCKNCSKTFSRMSLLHKHEESGC.

The protein belongs to the snail C2H2-type zinc-finger protein family. As to quaternary structure, interacts (via SNAG domain) with LIMD1 (via LIM domains), WTIP (via LIM domains) and AJUBA (via LIM domains). Interacts (via zinc fingers) with KPNA2, KPNB1, and TNPO1. May interact (via zinc fingers) with IPO7. Post-translationally, phosphorylated by GSK3B. Once phosphorylated, it becomes a target for ubiquitination. Ubiquitinated by the SCF(FBXO11) complex; ubiquitination requires previous GSK3B-mediated SNAI2 phosphorylation.

Its subcellular location is the nucleus. It localises to the cytoplasm. Its function is as follows. Transcriptional repressor that modulates both activator-dependent and basal transcription. Involved in the generation and migration of neural crest cells. Plays a role in mediating RAF1-induced transcriptional repression of the TJ protein, occludin (OCLN) and subsequent oncogenic transformation of epithelial cells. Represses BRCA2 expression by binding to its E2-box-containing silencer and recruiting CTBP1 and HDAC1 in breast cells. In epidermal keratinocytes, binds to the E-box in ITGA3 promoter and represses its transcription. Involved in the regulation of ITGB1 and ITGB4 expression and cell adhesion and proliferation in epidermal keratinocytes. Binds to E-box2 domain of BSG and activates its expression during TGFB1-induced epithelial-mesenchymal transition (EMT) in hepatocytes. Represses E-Cadherin/CDH1 transcription via E-box elements. Involved in osteoblast maturation. Binds to RUNX2 and SOC9 promoters and may act as a positive and negative transcription regulator, respectively, in osteoblasts. Binds to CXCL12 promoter via E-box regions in mesenchymal stem cells and osteoblasts. Plays an essential role in TWIST1-induced EMT and its ability to promote invasion and metastasis. The protein is Zinc finger protein SNAI2 (Snai2) of Mus musculus (Mouse).